A 106-amino-acid chain; its full sequence is Ribosomal protein eL42-like (106 aa).

Residues Tyr26–Lys53 are disordered. Lys53 carries the N6-methyllysine modification.

It belongs to the eukaryotic ribosomal protein eL42 family. Ubiquitously expressed.

Its subcellular location is the cytoplasm. The chain is Ribosomal protein eL42-like (RPL36AL) from Homo sapiens (Human).